The chain runs to 297 residues: NAC domain-containing protein 72 (297 aa).

The region spanning 14-162 (LPPGFRFYPT…DWVLCRIYKK (149 aa)) is the NAC domain. The DNA-binding element occupies 111 to 168 (VGIKKALVFYAGKAPKGTKTNWIMHEYRLIEHSRSHGSSKLDDWVLCRIYKKTSGSQR). 2 disordered regions span residues 168–195 (RQAV…SQLD) and 259–278 (GEAE…LTQS). Positions 266 to 277 (VNRQQNSSGLTQ) are enriched in polar residues.

In terms of tissue distribution, expressed in leaves and in root pericycle and epidermis.

The protein localises to the nucleus. Its function is as follows. Transcription factors that bind specifically to the 5'-CATGTG-3' motif and with bipartite regions with 5'-CGTr-3' and 5'-YACG-3' as cores. Involved in the regulation of metabolic reprogramming during senescence by promoting the chloroplast protein degradation and the catabolism of lysine, phytol and free fatty acids via the induction of CV, LKR/SDH and PES1 expression. Also triggers the degradation of starch and the accumulation of mono- and disaccharides during senescence by enhancing the expression of AMY1, SFP1 and SWEET15. This is NAC domain-containing protein 72 from Arabidopsis thaliana (Mouse-ear cress).